The primary structure comprises 461 residues: Argininosuccinate lyase (461 aa).

This sequence belongs to the lyase 1 family. Argininosuccinate lyase subfamily.

Its subcellular location is the cytoplasm. The enzyme catalyses 2-(N(omega)-L-arginino)succinate = fumarate + L-arginine. It functions in the pathway amino-acid biosynthesis; L-arginine biosynthesis; L-arginine from L-ornithine and carbamoyl phosphate: step 3/3. The polypeptide is Argininosuccinate lyase (Dehalococcoides mccartyi (strain ATCC BAA-2266 / KCTC 15142 / 195) (Dehalococcoides ethenogenes (strain 195))).